Reading from the N-terminus, the 539-residue chain is Beta-agarase A (539 aa).

Positions 1 to 19 (MKKNYLLLYFIFLLCGSIA) are cleaved as a signal peptide. Positions 21 to 289 (QDWNGIPVPA…WIRVYKPVAV (269 aa)) constitute a GH16 domain. Substrate-binding positions include Trp73, 82-92 (NAPQAWTNGSQ), 96-98 (QAQ), and Glu144. The active-site Nucleophile is Glu147. Catalysis depends on Glu152, which acts as the Proton donor. 2 residues coordinate substrate: Arg176 and Asp271. The disordered stretch occupies residues 332–353 (WANTNDIGSRDRGASNGRNNIN).

The protein belongs to the glycosyl hydrolase 16 family. As to quaternary structure, monomer. Proteolytically cleaved into mature beta-agarase A catalytic chain (AgaAc).

It is found in the secreted. It catalyses the reaction Hydrolysis of (1-&gt;4)-beta-D-galactosidic linkages in agarose, giving the tetramer as the predominant product.. Its function is as follows. Cleaves the beta-1,4-linkages between beta-D-galactose and alpha-L-3,6-anhydro-galactose residues in agarose. Cleaves agarose in a random manner with retention of the anomeric-bond configuration, producing beta-anomers that give rise progressively to alpha-anomers when mutarotation takes place. This chain is Beta-agarase A (agaA), found in Zobellia galactanivorans (strain DSM 12802 / CCUG 47099 / CIP 106680 / NCIMB 13871 / Dsij).